A 284-amino-acid chain; its full sequence is MKKKIQIVQTLLDALPFIKKFRDEIFVIKYGGSAQTDQKLKEKFAQDILLLYTVGIKPVIVHGGGKRITEILNRLKIDTTFIDGQRVTTADVMEIVEMVLSGDINKEIVSLLNNHGAKAIGVSGKDAHFITARPKDFEKFGYTGVIDHIDPSVIHNLLQEQFVPVIAPIAASNQLGHPGYNINADLCASKVAGALKAKKIIFLTDTPGVLDKEGKLISTLTEEKIELLKKDGTISGGMIPKVDACLEAIDEGVEKAHIIDGRVEHSLLLEIFTSEGIGTQVLGG.

Residues 64-65, Arg86, and Asn181 each bind substrate; that span reads GG.

The protein belongs to the acetylglutamate kinase family. ArgB subfamily.

It is found in the cytoplasm. The enzyme catalyses N-acetyl-L-glutamate + ATP = N-acetyl-L-glutamyl 5-phosphate + ADP. The protein operates within amino-acid biosynthesis; L-arginine biosynthesis; N(2)-acetyl-L-ornithine from L-glutamate: step 2/4. In terms of biological role, catalyzes the ATP-dependent phosphorylation of N-acetyl-L-glutamate. This Nitratiruptor sp. (strain SB155-2) protein is Acetylglutamate kinase.